The following is a 177-amino-acid chain: Inorganic pyrophosphatase (177 aa).

Lysine 31, arginine 45, and tyrosine 57 together coordinate substrate. Residues aspartate 67, aspartate 72, and aspartate 104 each contribute to the Mg(2+) site. Tyrosine 141 serves as a coordination point for substrate.

It belongs to the PPase family. In terms of assembly, homohexamer. Also forms homotrimers, but the trimeric form is 23% less active than the hexamer. In fact, likely forms a dimer of trimers. The cofactor is Mg(2+).

The protein localises to the cytoplasm. It catalyses the reaction diphosphate + H2O = 2 phosphate + H(+). Its activity is regulated as follows. Inhibited by sodium fluoride (NaF) in vitro, similarly to other class A type inorganic pyrophosphatases. Its function is as follows. Catalyzes the hydrolysis of inorganic pyrophosphate (PPi) forming two phosphate ions. The hydrolysis of PPi by inorganic pyrophosphatase releases a considerable amount of energy that can drive unfavorable biochemical transformations to completion. Is not active on nucleoside triphosphates (ATP, TTP, GTP, or CTP) or nucleoside diphosphate (ADP). This chain is Inorganic pyrophosphatase, found in Haloferax volcanii (strain ATCC 29605 / DSM 3757 / JCM 8879 / NBRC 14742 / NCIMB 2012 / VKM B-1768 / DS2) (Halobacterium volcanii).